The primary structure comprises 380 residues: Probable tRNA-splicing endonuclease subunit sen2 (380 aa).

Catalysis depends on residues Tyr281, His289, and Lys325.

The protein belongs to the tRNA-intron endonuclease family. In terms of assembly, heterotetramer composed of sen2, sen15, sen34 and sen54. Interacts directly with sen54.

It catalyses the reaction pretRNA = a 3'-half-tRNA molecule with a 5'-OH end + a 5'-half-tRNA molecule with a 2',3'-cyclic phosphate end + an intron with a 2',3'-cyclic phosphate and a 5'-hydroxyl terminus.. In terms of biological role, constitutes one of the two catalytic subunit of the tRNA-splicing endonuclease complex, a complex responsible for identification and cleavage of the splice sites in pre-tRNA. It cleaves pre-tRNA at the 5'- and 3'-splice sites to release the intron. The products are an intron and two tRNA half-molecules bearing 2',3'-cyclic phosphate and 5'-OH termini. There are no conserved sequences at the splice sites, but the intron is invariably located at the same site in the gene, placing the splice sites an invariant distance from the constant structural features of the tRNA body. This subunit may anchor the endonuclease complex to the nuclear membrane. Probably carries the active site for 5'-splice site cleavage. The chain is Probable tRNA-splicing endonuclease subunit sen2 (sen2) from Schizosaccharomyces pombe (strain 972 / ATCC 24843) (Fission yeast).